We begin with the raw amino-acid sequence, 541 residues long: Peptidyl-alpha-hydroxyglycine alpha-amidating lyase 1 (541 aa).

The signal sequence occupies residues 1-33 (MKSTDSAKCLGSKSLAICCLLLHLLLCIRPAVS). The Extracellular portion of the chain corresponds to 34-458 (QTQSPQRYLH…VAVHHPSGKA (425 aa)). N92 is a glycosylation site (N-linked (GlcNAc...) asparagine). 3 NHL repeats span residues 164-205 (GKVQ…FPPR), 215-258 (LGDA…YSRK), and 272-314 (GISY…FLSS). Intrachain disulfides connect C228/C248 and C299/C310. The N-linked (GlcNAc...) asparagine glycan is linked to N315. One copy of the NHL 4 repeat lies at 374–418 (KQLVSKFGPNNLQFQNPHDVAVTADGNEIYVAELNPMRIHKFVHR). The chain crosses the membrane as a helical span at residues 459 to 479 (ILVASLMLLFAGSTFALALIF). Residues 480–541 (ARRRKRGCLP…TKTLASAQYA (62 aa)) are Cytoplasmic-facing. Residues 521–541 (LDQQASDEEQETKTLASAQYA) are disordered.

The protein belongs to the peptidyl-alpha-hydroxyglycine alpha-amidating lyase family. It depends on Zn(2+) as a cofactor. Post-translationally, N-glycosylated. Widely expressed. In mature larvae, it is ubiquitously expressed with a low expression in all cells and a stronger expression in a subset of neurons. Colocalizes with neuropeptide proctolin. In adults, weak expression is observed in most neuronal cell bodies and in scattered large cells throughout the protocerebrum and also in the subesophageal neuromeres (at protein level).

It localises to the cell membrane. The catalysed reaction is a [peptide]-C-terminal (2S)-2-hydroxyglycine = a [peptide]-C-terminal amide + glyoxylate. Its function is as follows. Peptidyl-alpha-hydroxylglycine alpha-amidating lyase that catalyzes an essential reaction in C-terminal alpha-amidation of peptides. Mediates the dismutation of the unstable peptidyl(2-hydroxyglycine) intermediate to glyoxylate and the corresponding desglycine peptide amide. C-terminal amidation of peptides such as neuropeptides is essential for full biological activity. This Drosophila melanogaster (Fruit fly) protein is Peptidyl-alpha-hydroxyglycine alpha-amidating lyase 1 (Pal1).